The sequence spans 441 residues: RUN domain-containing protein 3A (441 aa).

An interaction with RAP2A region spans residues 1–293 (MEASFVQTTM…LQLQLEEAAA (293 aa)). Residues 52 to 184 (DDSSEEFVNF…IDFSFCLKGE (133 aa)) enclose the RUN domain. Threonine 210 carries the post-translational modification Phosphothreonine. The segment at 211–234 (DEEERHSAESSTSEDNSPEHPYLP) is disordered. A Phosphoserine modification is found at serine 227. Positions 262–317 (YLEELVRLRESQLKDLEAENRRLQLQLEEAAAQNQREKRELEGVILELQEQLTGLI) form a coiled coil. Residues 367–379 (PLSAEASLSSDSQ) are compositionally biased toward polar residues. The disordered stretch occupies residues 367 to 399 (PLSAEASLSSDSQRLGEGKRDEEPWGPIGKDPT). The span at 380-389 (RLGEGKRDEE) shows a compositional bias: basic and acidic residues. 2 positions are modified to phosphoserine: serine 411 and serine 414.

It belongs to the RUNDC3 family. Interacts with the GTP-bound form of RAP2A.

In terms of biological role, may act as an effector of RAP2A in neuronal cells. This chain is RUN domain-containing protein 3A (RUNDC3A), found in Bos taurus (Bovine).